A 300-amino-acid chain; its full sequence is U1 small nuclear ribonucleoprotein 70 kDa homolog (300 aa).

In terms of domain architecture, RRM spans 107-198 (RTIFIGRLPY…RTVKYFKPRR (92 aa)). Disordered regions lie at residues 204 to 248 (GGRG…AYSA) and 263 to 300 (NRPL…APDY). Positions 265-279 (PLLSAATPTAAVTSV) are enriched in low complexity.

In terms of assembly, component of the spliceosome, where it is associated with snRNP U1. Binds stem loop I of U1 snRNA. Interacts with mRNA.

It is found in the nucleus. Functionally, involved in nuclear mRNA splicing. This is U1 small nuclear ribonucleoprotein 70 kDa homolog (SNP1) from Saccharomyces cerevisiae (strain ATCC 204508 / S288c) (Baker's yeast).